Reading from the N-terminus, the 87-residue chain is Large ribosomal subunit protein bL27 (87 aa).

Belongs to the bacterial ribosomal protein bL27 family.

This chain is Large ribosomal subunit protein bL27, found in Stenotrophomonas maltophilia (strain K279a).